The following is a 355-amino-acid chain: uncharacterized protein (355 aa).

132-139 (GPPGCGKT) provides a ligand contact to ATP.

This sequence belongs to the AAA ATPase family.

The protein localises to the mitochondrion. This is an uncharacterized protein from Schizosaccharomyces pombe (strain 972 / ATCC 24843) (Fission yeast).